Consider the following 725-residue polypeptide: Protein ECM27 (725 aa).

The next 12 membrane-spanning stretches (helical) occupy residues 21 to 41, 119 to 139, 157 to 177, 178 to 198, 397 to 417, 439 to 459, 470 to 490, 526 to 546, 559 to 579, 621 to 641, 668 to 688, and 704 to 724; these read VTFI…LGIC, VLGA…IIMS, LLFS…NQVT, VLNC…KLTF, ISDA…KLSC, LPII…CSIL, LVYL…TAFI, IQII…SLLA, ILGL…NSVG, LNSM…IGAF, FIVS…FFGG, and GISM…LELF.

It belongs to the Ca(2+):cation antiporter (CaCA) (TC 2.A.19) family.

It is found in the membrane. The polypeptide is Protein ECM27 (ECM27) (Saccharomyces cerevisiae (strain ATCC 204508 / S288c) (Baker's yeast)).